The primary structure comprises 338 residues: UPF0284 protein TV0153 (338 aa).

The protein belongs to the UPF0284 family.

The protein is UPF0284 protein TV0153 of Thermoplasma volcanium (strain ATCC 51530 / DSM 4299 / JCM 9571 / NBRC 15438 / GSS1).